The following is a 277-amino-acid chain: tRNA pseudouridine synthase B (277 aa).

Aspartate 38 acts as the Nucleophile in catalysis.

This sequence belongs to the pseudouridine synthase TruB family. Type 1 subfamily.

The enzyme catalyses uridine(55) in tRNA = pseudouridine(55) in tRNA. Its function is as follows. Responsible for synthesis of pseudouridine from uracil-55 in the psi GC loop of transfer RNAs. The chain is tRNA pseudouridine synthase B from Sulfurovum sp. (strain NBC37-1).